Here is a 631-residue protein sequence, read N- to C-terminus: Polycomb group protein EMBRYONIC FLOWER 2 (631 aa).

The C2H2-type zinc-finger motif lies at Phe324 to His347. Basic and acidic residues predominate over residues Asp424–Gly446. Residues Asp424 to Ser465 form a disordered region. Positions Arg505–Phe583 are VEFS-box.

Belongs to the VEFS (VRN2-EMF2-FIS2-SU(Z)12) family. As to quaternary structure, in plants, PcG complexes are probably composed of a member of the EZ family (CLF or MEA), FIE, and a member of the VEFS family (FIS2, VRN2 or EMF2). Binds to ALP1. Widely expressed throughout the life cycle with higher levels in proliferating tissues. Expressed in both vegetative and the reproductive shoot meristems.

It is found in the nucleus. Polycomb group (PcG) protein. Involved in flowering processes by repressing unknown target genes and preventing reproductive development. Participates in polycomb group (PcG) protein complex-mediated (probably in complex with EMF1) silencing of the flower homeotic genes AGAMOUS (AG), PISTILLATA (PI), and APETALA3 (AP3), as well as of some regulatory genes such as ABSCISIC ACID INSENSITIVE3 (ABI3), LONG VEGETATIVE PHASE1 (LOV1), and FLOWERING LOCUS C (FLC) during vegetative development, by mediating trimethylation of histone 3 lysine 27 on the AG chromatin (H3K27me3). PcG proteins act by forming multiprotein complexes, which are required to maintain the transcriptionally repressive state of homeotic genes throughout development. PcG proteins are not required to initiate repression, but to maintain it during later stages of development. They probably act via the methylation of histones, rendering chromatin heritably changed in its expressibility. The protein is Polycomb group protein EMBRYONIC FLOWER 2 (EMF2) of Arabidopsis thaliana (Mouse-ear cress).